A 72-amino-acid chain; its full sequence is UPF0154 protein lhv_1362 (72 aa).

Residues 3 to 23 (LGLAIFLIIIALLVGAVAGFY) traverse the membrane as a helical segment.

This sequence belongs to the UPF0154 family.

The protein localises to the cell membrane. In Lactobacillus helveticus (strain DPC 4571), this protein is UPF0154 protein lhv_1362.